A 544-amino-acid polypeptide reads, in one-letter code: Chaperonin GroEL 2 (544 aa).

Residues 29–32 (TLGP), 86–90 (DGTTT), Gly413, 479–481 (NAA), and Asp495 each bind ATP.

Belongs to the chaperonin (HSP60) family. As to quaternary structure, forms a cylinder of 14 subunits composed of two heptameric rings stacked back-to-back. Interacts with the co-chaperonin GroES.

The protein resides in the cytoplasm. It carries out the reaction ATP + H2O + a folded polypeptide = ADP + phosphate + an unfolded polypeptide.. In terms of biological role, together with its co-chaperonin GroES, plays an essential role in assisting protein folding. The GroEL-GroES system forms a nano-cage that allows encapsulation of the non-native substrate proteins and provides a physical environment optimized to promote and accelerate protein folding. This Prochlorococcus marinus (strain MIT 9313) protein is Chaperonin GroEL 2.